Consider the following 228-residue polypeptide: Delta-type opioid receptor (228 aa).

A helical membrane pass occupies residues 1-3; it reads GIV. Residues 4-13 lie on the Cytoplasmic side of the membrane; that stretch reads RYTKMKTATN. Residues 14 to 38 traverse the membrane as a helical segment; sequence IYIFNLALADALATSTLPFQSAKYL. Residues 39–50 lie on the Extracellular side of the membrane; sequence METWPFGELLCK. Cys49 and Cys126 form a disulfide bridge. A helical membrane pass occupies residues 51-72; sequence AVLSIDYYNMFTSIFTLTMMSV. The Cytoplasmic segment spans residues 73–91; the sequence is DRYIAVCHPVKALDFRTPA. The chain crosses the membrane as a helical span at residues 92 to 114; that stretch reads KAKLINICIWVLASGVGVPIMVM. At 115–134 the chain is on the extracellular side; that stretch reads AVTRPRDGAVVCMLQFPSPS. The helical transmembrane segment at 135 to 166 threads the bilayer; that stretch reads WYWDTVTKICVFLFAFVVPILVITVCYGLMLL. At 167 to 189 the chain is on the cytoplasmic side; sequence RLRSVRLLSGSKEKDRSLRRITR. Residues 190 to 212 traverse the membrane as a helical segment; it reads MVLVVVGAFVVCWAPIHIFVIVW. At 213-227 the chain is on the extracellular side; sequence TLVDIDRRDPLVVAA.

The protein belongs to the G-protein coupled receptor 1 family. As to quaternary structure, may form homooligomers. Forms a heterodimer with OPRM1. Interacts with GPRASP1. Interacts with RTP4; the interaction promotes cell surface localization of the OPRD1-OPRM1 heterodimer. Ubiquitinated. A basal ubiquitination seems not to be related to degradation. Ubiquitination is increased upon formation of OPRM1:OPRD1 oligomers leading to proteasomal degradation; the ubiquitination is diminished by RTP4. Detected in myenteric plexus and smooth muscle (at protein level). Detected in brain and intestine.

The protein localises to the cell membrane. Its function is as follows. G-protein coupled receptor that functions as a receptor for endogenous enkephalins and for a subset of other opioids. Ligand binding causes a conformation change that triggers signaling via guanine nucleotide-binding proteins (G proteins) and modulates the activity of down-stream effectors, such as adenylate cyclase. Signaling leads to the inhibition of adenylate cyclase activity. Inhibits neurotransmitter release by reducing calcium ion currents and increasing potassium ion conductance. Plays a role in the perception of pain and in opiate-mediated analgesia. Plays a role in developing analgesic tolerance to morphine. In Sus scrofa (Pig), this protein is Delta-type opioid receptor (OPRD1).